The sequence spans 302 residues: Cuticle collagen dpy-13 (302 aa).

Triple-helical region regions lie at residues 106 to 135, 154 to 210, and 219 to 278; these read GPQGAPGAPGKPGRPGKPGAPGFPGNPGKA, GPPG…EGLP, and GEPG…PGTP. The interval 108–284 is disordered; that stretch reads QGAPGAPGKP…PGTPGERGIC (177 aa). A compositionally biased stretch (pro residues) spans 144 to 159; it reads TPPPCKPCPQGPPGAP. Residues 188–197 are compositionally biased toward low complexity; it reads PKGPNGAPGK. 2 stretches are compositionally biased toward pro residues: residues 247 to 257 and 268 to 277; these read QPGPKGPPGPD and QPGPVGPPGT.

Belongs to the cuticular collagen family. As to quaternary structure, collagen polypeptide chains are complexed within the cuticle by disulfide bonds and other types of covalent cross-links.

In terms of biological role, nematode cuticles are composed largely of collagen-like proteins. The cuticle functions both as an exoskeleton and as a barrier to protect the worm from its environment. Mutations in dpy-13 affects the body shape. The sequence is that of Cuticle collagen dpy-13 (dpy-13) from Caenorhabditis elegans.